The chain runs to 209 residues: Cerebral peptide 1 (209 aa).

A signal peptide spans 1–20 (MLLAKISVVVLLLAIDGTSS). Over residues 21 to 39 (SESTDNVVLSSSPDSQKAA) the composition is skewed to polar residues. The propeptide at 21 to 43 (SESTDNVVLSSSPDSQKAATSRH) is connecting peptide 1. Residues 21 to 56 (SESTDNVVLSSSPDSQKAATSRHKRAPGWGKRSSLN) are disordered. Position 49 is a tryptophan amide (W49). Residues 53 to 77 (SSLNDEDLFADSDSAQELLDSVAAL) constitute a propeptide, connecting peptide 2. 2 positions are modified to tryptophan amide: W83 and W105. The interval 98 to 169 (EAKRAPGWGK…APGWGKRSGG (72 aa)) is disordered. Positions 109-122 (GQEIDVDEDGSEQE) are cleaved as a propeptide — connecting peptide 4. Tryptophan amide occurs at positions 128, 135, 142, 149, 156, and 163. The propeptide at 167–191 (SGGDYCETLEKMVDAYIYKAVEVDS) is connecting peptide 5. A disulfide bond links C172 and C197.

Homodimer; disulfide-linked. As to expression, cerebral peptide 1 is expressed in the cerebral, pedal and buccal ganglia and B1 and B2 neurons. APGW-amide is expressed in buccal ganglia and several neurons.

Its subcellular location is the secreted. In terms of biological role, may function as a peptide transmitter. The protein is Cerebral peptide 1 of Aplysia californica (California sea hare).